We begin with the raw amino-acid sequence, 484 residues long: Threonine synthase-like 2 (484 aa).

Lys-113 is subject to N6-(pyridoxal phosphate)lysine.

This sequence belongs to the threonine synthase family. Pyridoxal 5'-phosphate is required as a cofactor.

Its function is as follows. Acts as a catabolic phospho-lyase on both gamma- and beta-phosphorylated substrates. Degrades O-phospho-threonine (PThr) to alpha-ketobutyrate, ammonia and phosphate. In Pongo abelii (Sumatran orangutan), this protein is Threonine synthase-like 2 (THNSL2).